Reading from the N-terminus, the 200-residue chain is Pyridoxine/pyridoxamine 5'-phosphate oxidase (200 aa).

FMN-binding positions include Arg-48–Lys-53, Tyr-63–Thr-64, Lys-70, and Gln-92. Lys-53 serves as a coordination point for substrate. Substrate-binding residues include Tyr-110, Arg-114, and Ser-118. FMN-binding positions include Gln-127–Ser-128 and Trp-171. Residue Arg-177–His-179 participates in substrate binding. FMN is bound at residue Arg-181.

It belongs to the pyridoxamine 5'-phosphate oxidase family. As to quaternary structure, homodimer. The cofactor is FMN.

It catalyses the reaction pyridoxamine 5'-phosphate + O2 + H2O = pyridoxal 5'-phosphate + H2O2 + NH4(+). The enzyme catalyses pyridoxine 5'-phosphate + O2 = pyridoxal 5'-phosphate + H2O2. Its pathway is cofactor metabolism; pyridoxal 5'-phosphate salvage; pyridoxal 5'-phosphate from pyridoxamine 5'-phosphate: step 1/1. The protein operates within cofactor metabolism; pyridoxal 5'-phosphate salvage; pyridoxal 5'-phosphate from pyridoxine 5'-phosphate: step 1/1. Functionally, catalyzes the oxidation of either pyridoxine 5'-phosphate (PNP) or pyridoxamine 5'-phosphate (PMP) into pyridoxal 5'-phosphate (PLP). This Cereibacter sphaeroides (strain ATCC 17029 / ATH 2.4.9) (Rhodobacter sphaeroides) protein is Pyridoxine/pyridoxamine 5'-phosphate oxidase.